A 369-amino-acid chain; its full sequence is MFGEMSGEYGELGVDKERLKEVGIELDKSKRSGVYLQEDQDAKTFSSFFEGVEVMSIKQAMEKYDWVKDYFWKILRKDQDEFTRMADTEDVNGYFIRSLPGAKVEIPVEACLYLKKVEKQRVHNIVIAEEGSELNIISGCTSHPGVAGMHIGISEFFVKKNAKLSFTMIHSWDTTIEVRPRTAIKVEEGGTFISNYILLNPVKLVQTYPTAYVEKDATAIFNSVIVALEGSVVDSGSRAVLMGENSRAEIISRTISKGGKIIARGHIIGDAPEVKGHLECKGLMLSESGLIDAIPELEARYPNVELSHEAAIGKIAEEGIFYLMSRGLSRDEAISAIVRGFMEIEIKGLPEALQEAIRRTIEMAERDLL.

The protein belongs to the iron-sulfur cluster assembly SufBD family.

The protein is Iron-sulfur cluster assembly SufBD family protein AF_2365 of Archaeoglobus fulgidus (strain ATCC 49558 / DSM 4304 / JCM 9628 / NBRC 100126 / VC-16).